A 397-amino-acid chain; its full sequence is Keratinocyte differentiation factor 1 (397 aa).

Residues 1 to 16 are compositionally biased toward pro residues; it reads MPRPGQPRPSSGPPRL. Disordered stretches follow at residues 1–67, 130–158, and 192–214; these read MPRP…SAEP, EHNG…MGSS, and LAEP…RGSE. Basic and acidic residues predominate over residues 44-55; it reads RPDPKDPGHHGP. Positions 201 to 211 are enriched in polar residues; that stretch reads SLPSTFTNSPR. A Phosphoserine modification is found at Ser-218. 2 disordered regions span residues 304-339 and 361-392; these read ISTR…TMLG and ARKL…GAPL. The span at 321–330 shows a compositional bias: low complexity; that stretch reads ARSTAPAAAP. Positions 375-388 are enriched in polar residues; it reads SQDSSFQGTDTDSS.

It localises to the cytoplasm. The protein resides in the cell junction. Functionally, plays a role in the regulation of the epidermis formation during early development. Required both as an inhibitor of basal cell proliferation and a promoter of differentiation of basal progenitor cell progeny. This is Keratinocyte differentiation factor 1 (Kdf1) from Mus musculus (Mouse).